The sequence spans 179 residues: uncharacterized protein (179 aa).

Helical transmembrane passes span 9–31 (WILVILFATLLFFAFTGIFVSTL), 41–63 (AFLLGFLGALVFANKLLFGYGSF), 114–136 (AYYGIFTLMLIIMLLSKFDLLGA), and 146–168 (AFWGAAVITLFVFALEITANYLM).

The protein resides in the cell membrane. This is an uncharacterized protein from Aquifex aeolicus (strain VF5).